The sequence spans 340 residues: Delta-aminolevulinic acid dehydratase (340 aa).

Cys-134, Cys-136, and Cys-144 together coordinate Zn(2+). Lys-211 (schiff-base intermediate with substrate) is an active-site residue. Residues Arg-221 and Arg-233 each coordinate 5-aminolevulinate. Catalysis depends on Lys-264, which acts as the Schiff-base intermediate with substrate. Residues Ser-291 and Tyr-330 each contribute to the 5-aminolevulinate site.

This sequence belongs to the ALAD family. As to quaternary structure, homooctamer. It depends on Zn(2+) as a cofactor.

The catalysed reaction is 2 5-aminolevulinate = porphobilinogen + 2 H2O + H(+). It functions in the pathway porphyrin-containing compound metabolism; protoporphyrin-IX biosynthesis; coproporphyrinogen-III from 5-aminolevulinate: step 1/4. Its function is as follows. Catalyzes an early step in the biosynthesis of tetrapyrroles. Binds two molecules of 5-aminolevulinate per subunit, each at a distinct site, and catalyzes their condensation to form porphobilinogen. This is Delta-aminolevulinic acid dehydratase (HEM2) from Eremothecium gossypii (strain ATCC 10895 / CBS 109.51 / FGSC 9923 / NRRL Y-1056) (Yeast).